Here is a 237-residue protein sequence, read N- to C-terminus: Probable transcriptional regulatory protein Mfl546 (237 aa).

The tract at residues 1-20 is disordered; it reads MGRAHEVRAASMAKTAAKKS. Positions 9 to 20 are enriched in low complexity; the sequence is AASMAKTAAKKS.

Belongs to the TACO1 family.

The protein localises to the cytoplasm. The protein is Probable transcriptional regulatory protein Mfl546 of Mesoplasma florum (strain ATCC 33453 / NBRC 100688 / NCTC 11704 / L1) (Acholeplasma florum).